The primary structure comprises 353 residues: Trans-enoyl reductase RAP2 (353 aa).

Residue 46–49 (CDHK) coordinates NADP(+). Position 131–138 (131–138 (TGLSTIGM)) interacts with substrate. Residues 189–192 (SPRN), tyrosine 207, and 254–255 (LE) contribute to the NADP(+) site. 274–278 (GMALL) is a binding site for substrate. Residue 343–344 (VS) participates in NADP(+) binding.

It belongs to the zinc-containing alcohol dehydrogenase family. Monomer.

It participates in secondary metabolite biosynthesis. Functionally, trans-enoyl reductase; part of the gene cluster that mediates the biosynthesis of a tyrosine-derived cytochalasan acting as a fungal signal recognized by resistant rice plants and leads to avirulence in Pi33 resistant rice cultivars. The first step in the pathway is catalyzed by the hybrid PKS-NRPS ACE1, assisted by the enoyl reductase RAP1, that are responsible for fusion of the tyrosine precursor and the polyketide backbone. The polyketide synthase module (PKS) of ACE1 is responsible for the synthesis of the polyketide backbone and the downstream nonribosomal peptide synthetase (NRPS) amidates the carboxyl end of the polyketide with the tyrosine precursor. Because ACE1 lacks a designated enoylreductase (ER) domain, the required activity is provided the enoyl reductase RAP1. Reduction by the hydrolyase ORFZ, followed by dehydration and intra-molecular Diels-Alder cyclization by the Diels-Alderase ORF3 then yield the required isoindolone-fused macrocycle. A number of oxidative steps catalyzed by the tailoring enzymes identified within the cluster, including cytochrome P450 monooxygenases CYP1 to CYP4, the FAD-linked oxidoreductase OXR2 and the short-chain dehydrogenase/reductase OXR1, are further required to afford the final cytochalasans that confer avirulence and which have still to be identified. The monooxygenase CYP1 has been shown to be a site-selective C-18 hydroxylase whereas the function of CYP3 is the site-selective epoxidation of the C-6/C-7 olefin that is present in some intermediate compounds. Finally, SYN2 and RAP2 are not required for avirulence in Pi33 resistant rice cultivars. In Pyricularia oryzae (strain 70-15 / ATCC MYA-4617 / FGSC 8958) (Rice blast fungus), this protein is Trans-enoyl reductase RAP2.